Consider the following 282-residue polypeptide: D-alanine aminotransferase (282 aa).

Tyr32 lines the substrate pocket. Arg51 contributes to the pyridoxal 5'-phosphate binding site. Residues Arg99 and His101 each coordinate substrate. Lys146 (proton acceptor) is an active-site residue. Lys146 is modified (N6-(pyridoxal phosphate)lysine). Glu178 contacts pyridoxal 5'-phosphate.

The protein belongs to the class-IV pyridoxal-phosphate-dependent aminotransferase family. As to quaternary structure, homodimer. Requires pyridoxal 5'-phosphate as cofactor.

The catalysed reaction is D-alanine + 2-oxoglutarate = D-glutamate + pyruvate. Acts on the D-isomers of alanine, leucine, aspartate, glutamate, aminobutyrate, norvaline and asparagine. The enzyme transfers an amino group from a substrate D-amino acid to the pyridoxal phosphate cofactor to form pyridoxamine and an alpha-keto acid in the first half-reaction. The second half-reaction is the reverse of the first, transferring the amino group from the pyridoxamine to a second alpha-keto acid to form the product D-amino acid via a ping-pong mechanism. This is an important process in the formation of D-alanine and D-glutamate, which are essential bacterial cell wall components. The polypeptide is D-alanine aminotransferase (dat) (Staphylococcus aureus (strain MSSA476)).